The chain runs to 887 residues: Probable LRR receptor-like serine/threonine-protein kinase At5g59680 (887 aa).

A signal peptide spans 1 to 23 (MERSLELLLLLIRTLAIIHISQA). Topologically, residues 25 to 510 (SQQGFISLDC…TKSGKSFPVT (486 aa)) are extracellular. N-linked (GlcNAc...) asparagine glycans are attached at residues asparagine 143, asparagine 230, asparagine 256, asparagine 289, asparagine 338, asparagine 363, asparagine 400, asparagine 416, asparagine 432, asparagine 445, asparagine 464, and asparagine 471. LRR repeat units follow at residues 411 to 434 (RITTLNLSSSGLTGTITAAIQNLT), 435 to 457 (TLEKLDLSNNNLTGEVPEFLSNM), and 459 to 481 (SLLVINLSGNDLNGTIPQSLQRK). A helical transmembrane segment spans residues 511-531 (IVASVGSAAILIVVLVLVLFL). The Cytoplasmic segment spans residues 532–887 (RKKKPSAVEV…FDAEMIPRAR (356 aa)). The residue at position 571 (threonine 571) is a Phosphothreonine. The 274-residue stretch at 580–853 (NNFGRVVGEG…HVVIELKECL (274 aa)) folds into the Protein kinase domain. Residues 586–594 (VGEGGFGVV) and lysine 608 each bind ATP. Residue tyrosine 653 is modified to Phosphotyrosine. Catalysis depends on aspartate 705, which acts as the Proton acceptor. The residue at position 739 (serine 739) is a Phosphoserine. Residues threonine 740 and threonine 745 each carry the phosphothreonine modification. Tyrosine 753 is subject to Phosphotyrosine.

This sequence belongs to the protein kinase superfamily. Ser/Thr protein kinase family.

The protein localises to the membrane. It catalyses the reaction L-seryl-[protein] + ATP = O-phospho-L-seryl-[protein] + ADP + H(+). The enzyme catalyses L-threonyl-[protein] + ATP = O-phospho-L-threonyl-[protein] + ADP + H(+). The polypeptide is Probable LRR receptor-like serine/threonine-protein kinase At5g59680 (Arabidopsis thaliana (Mouse-ear cress)).